Here is a 148-residue protein sequence, read N- to C-terminus: Azurin (148 aa).

Residues Met1–Ala20 form the signal peptide. Positions Ala21–Lys148 constitute a Plastocyanin-like domain. A disulfide bond links Cys23 and Cys46. Positions 66, 132, 137, and 141 each coordinate Cu cation.

The protein localises to the periplasm. Functionally, transfers electrons from cytochrome c551 to cytochrome oxidase. The protein is Azurin (azu) of Pseudomonas aeruginosa (strain ATCC 15692 / DSM 22644 / CIP 104116 / JCM 14847 / LMG 12228 / 1C / PRS 101 / PAO1).